The sequence spans 344 residues: MENIAVLGAGSWGTALALVLADNGHHVRLWGHRTEQISEINEKRTNEKYLPGVRLPDAIIGYDDLCAALDGVAIVVLAVPTKAIRSVLADVRACLAKPITIVAVSKGIEPGTHKRVSEMVAEEMGEWLADVVVLSGPSHAEEVVLRHPTTVAVSSPNMEAARRIQDIFMNHHYFRVYTNPDLIGVEVGGALKNIIALAAGISDGLGYGDNAKAALITRGLAEIARLGCALGANPLTFAGLTGVGDLIVTCTSVHSRNWRAGYMLGQGKKLDEVLESMGMVVEGVRTTKAAYELAKELGVKMPITEALYDVLFAGKDPKEAVDSLMARGKKEEMDDLNNIFAEQE.

Residues Ser11, Trp12, His32, Arg33, and Lys106 each contribute to the NADPH site. Lys106, Gly136, and Ser138 together coordinate sn-glycerol 3-phosphate. NADPH is bound at residue Ala140. Sn-glycerol 3-phosphate-binding residues include Lys192, Asp245, Ser255, Arg256, and Asn257. The active-site Proton acceptor is Lys192. NADPH is bound at residue Arg256. Positions 280 and 282 each coordinate NADPH.

Belongs to the NAD-dependent glycerol-3-phosphate dehydrogenase family.

It localises to the cytoplasm. It catalyses the reaction sn-glycerol 3-phosphate + NAD(+) = dihydroxyacetone phosphate + NADH + H(+). The enzyme catalyses sn-glycerol 3-phosphate + NADP(+) = dihydroxyacetone phosphate + NADPH + H(+). The protein operates within membrane lipid metabolism; glycerophospholipid metabolism. Catalyzes the reduction of the glycolytic intermediate dihydroxyacetone phosphate (DHAP) to sn-glycerol 3-phosphate (G3P), the key precursor for phospholipid synthesis. This chain is Glycerol-3-phosphate dehydrogenase [NAD(P)+], found in Geobacillus kaustophilus (strain HTA426).